A 270-amino-acid chain; its full sequence is Homeobox protein Hox-D12 (270 aa).

The interval 102 to 122 is disordered; sequence APEAAAGPEERGRTRPSFAPE. A DNA-binding region (homeobox) is located at residues 202–261; the sequence is ARKKRKPYTKQQIAELENEFLVNEFINRQKRKELSNRLNLSDQQVKIWFQNRRMKKKRVV.

Belongs to the Abd-B homeobox family.

It localises to the nucleus. Sequence-specific transcription factor which is part of a developmental regulatory system that provides cells with specific positional identities on the anterior-posterior axis. The sequence is that of Homeobox protein Hox-D12 (HOXD12) from Homo sapiens (Human).